Reading from the N-terminus, the 239-residue chain is Leucyl/phenylalanyl-tRNA--protein transferase (239 aa).

The protein belongs to the L/F-transferase family.

The protein resides in the cytoplasm. It catalyses the reaction N-terminal L-lysyl-[protein] + L-leucyl-tRNA(Leu) = N-terminal L-leucyl-L-lysyl-[protein] + tRNA(Leu) + H(+). It carries out the reaction N-terminal L-arginyl-[protein] + L-leucyl-tRNA(Leu) = N-terminal L-leucyl-L-arginyl-[protein] + tRNA(Leu) + H(+). The catalysed reaction is L-phenylalanyl-tRNA(Phe) + an N-terminal L-alpha-aminoacyl-[protein] = an N-terminal L-phenylalanyl-L-alpha-aminoacyl-[protein] + tRNA(Phe). Functionally, functions in the N-end rule pathway of protein degradation where it conjugates Leu, Phe and, less efficiently, Met from aminoacyl-tRNAs to the N-termini of proteins containing an N-terminal arginine or lysine. In Aliivibrio fischeri (strain ATCC 700601 / ES114) (Vibrio fischeri), this protein is Leucyl/phenylalanyl-tRNA--protein transferase.